Here is a 74-residue protein sequence, read N- to C-terminus: U3-agatoxin-Ao1g (74 aa).

An N-terminal signal peptide occupies residues 1-20 (MRAIISLLLISTMVFGVIEA). Residues 21 to 34 (VSVEEGLKIFEGER) constitute a propeptide that is removed on maturation. Disulfide bonds link C37–C53, C44–C58, C52–C68, and C60–C66. Position 72 is an asparagine amide (N72).

The protein belongs to the neurotoxin 07 (Beta/delta-agtx) family. 03 (aga-4) subfamily. Aga sub-subfamily. As to expression, expressed by the venom gland.

The protein resides in the secreted. Functionally, insecticidal neurotoxin that modulates the insect Nav channel (DmNaV1/tipE (para/tipE)) in a unique manner, with both the activation and inactivation processes being affected. The voltage dependence of activation is shifted toward more hyperpolarized potentials (analogous to site 4 toxins) and a non-inactivating persistent sodium current is induced (site 3-like action). Interestingly, both effects take place in a voltage-dependent manner, producing a bell-shaped curve between -80 and 0 mV. The polypeptide is U3-agatoxin-Ao1g (Agelena orientalis (Funnel-web spider)).